The primary structure comprises 213 residues: Non-structural protein NP-1 (213 aa).

The segment at 1-80 (MERSRSPRET…ATRKETATKK (80 aa)) is disordered. Composition is skewed to basic and acidic residues over residues 15 to 33 (SRDK…ERTR) and 43 to 58 (AHGE…REKN).

Belongs to the Bocaparvovirus Non-structural protein NP-1 family.

It is found in the host nucleus. Functionally, required for the expression of the capsid proteins. Performs the splicing and internal polyadenylation of the viral capsid-encoding mRNA precursor, which allows its maturation and expression. Transactivates the viral promoter. This chain is Non-structural protein NP-1 (NP1), found in Bos taurus (Bovine).